The chain runs to 190 residues: MITMFKIVRGDITKFRAEAIVNAANKYLEHGGGVAYAIAKAASGDVSEYTRISKEEMRRQLGKDWIEHGEVVVTPPMKLKENGVKYVIHTVGPYCGGVWSKDKEEKLKLAILGALKKADELGVKSIAFPAISAGIYGCPLKEVVRTFKEVVKEFLKVANHVKEVYLVLYSERDYKLALETIGLGDNDESR.

One can recognise a Macro domain in the interval 1–185; that stretch reads MITMFKIVRG…LALETIGLGD (185 aa).

This is an uncharacterized protein from Pyrococcus horikoshii (strain ATCC 700860 / DSM 12428 / JCM 9974 / NBRC 100139 / OT-3).